The following is a 564-amino-acid chain: Bifunctional protein CrtB/UppS (564 aa).

Asp329 is an active-site residue. Residue Asp329 coordinates Mg(2+). Substrate is bound by residues 330 to 333, Trp334, His346, and 374 to 376; these read GNRR and STE. Asn377 acts as the Proton acceptor in catalysis. Substrate contacts are provided by residues Trp378, Arg380, Arg497, and 502–504; that span reads RIS. Glu515 is a Mg(2+) binding site.

The protein in the N-terminal section; belongs to the phytoene/squalene synthase family. In the C-terminal section; belongs to the UPP synthase family. As to quaternary structure, homodimer. Requires Mg(2+) as cofactor.

It carries out the reaction 2 (2E,6E,10E)-geranylgeranyl diphosphate = 15-cis-phytoene + 2 diphosphate. The protein operates within carotenoid biosynthesis; phytoene biosynthesis; all-trans-phytoene from geranylgeranyl diphosphate: step 1/1. In terms of biological role, catalyzes the reaction from prephytoene diphosphate to phytoene. Catalyzes the condensation of isopentenyl diphosphate (IPP) with allylic pyrophosphates generating different type of terpenoids. In Streptomyces coelicolor (strain ATCC BAA-471 / A3(2) / M145), this protein is Bifunctional protein CrtB/UppS (crtB/uppS3).